The chain runs to 279 residues: MAFQGPSRTLTQQSSAASSDDLQKILFSPDAIKKMATECDLGRHHWMRADNAISVRPLVPQVTSNNLLPFFKSGYDAGELRSKGYMSVPQVLCAVTRTVSTDAEGSLKIYLADLGDKELSPIDGQCVTLHNHELPALISFQPTYDCPMELVGNRHRCFAVVVERHGYIGYGGTTASVCSNWQAQFSSKNNNYTHAAAGKTLVLPYNRLAEHSKPSAVARLLKSQLNNVSSSRYLLPNVALNQNASGHESEILKESPPIAIGSPSASRNNSFRSQVVNGL.

Low complexity predominate over residues 256-266; sequence PPIAIGSPSAS. The tract at residues 256–279 is disordered; the sequence is PPIAIGSPSASRNNSFRSQVVNGL. The span at 267–279 shows a compositional bias: polar residues; that stretch reads RNNSFRSQVVNGL.

This sequence belongs to the cucumovirus movement protein family.

Its subcellular location is the host cell junction. The protein localises to the host plasmodesma. In terms of biological role, transports viral genome to neighboring plant cells directly through plasmosdesmata, without any budding. The movement protein allows efficient cell to cell propagation, by bypassing the host cell wall barrier. Acts by forming a tubular structure at the host plasmodesmata, enlarging it enough to allow free passage of virion capsids. The sequence is that of Movement protein from Cucumis sativus (Cucumber).